The chain runs to 374 residues: MSPCPPQQSRNRVTQLPIPEPGEMELTWQEIMSITELQGLNAPSEPSFEPPAPVPYPGPPPPPSYCPCSIHSEPGFPLPAPPYELPAPTSHVPDPPYSYGSNMTVPVSKPLTLSGLLSDPLPDPLALLDIGLSAGPSKPQEDPESDSGLSLNYSDAESLELEGTEAGRRRSEYVEMYPVEYPYSLMPNSLTHPNYALPPAETPLALEPSSGPVRAKPTARGEAGSRDERRALAMKIPFPTDKIVNLPVDDFNELLARYPLTESQLALVRDIRRRGKNKVAAQNCRKRKLETIVQLERELERLGSERERLLRARGEADRTLEVMRQQLTDLYRDIFQHLRDEAGNSYSPEDYALHQAADGAIFLVPRGTKMEATD.

Disordered regions lie at residues 1–21 and 40–61; these read MSPC…IPEP and LNAP…GPPP. The segment at 1 to 83 is required for interaction with MAPK8; the sequence is MSPCPPQQSR…PGFPLPAPPY (83 aa). The tract at residues 1–207 is transactivation domain; that stretch reads MSPCPPQQSR…PPAETPLALE (207 aa). Over residues 48–61 the composition is skewed to pro residues; sequence FEPPAPVPYPGPPP. 2 consecutive short sequence motifs (PXY motif) follow at residues 61–65 and 79–83; these read PPPSY and PAPPY. The tract at residues 132 to 165 is disordered; it reads LSAGPSKPQEDPESDSGLSLNYSDAESLELEGTE. Ser-158 carries the phosphoserine; by MAPK8 modification. Ser-171 is modified (phosphoserine; by PKA). The segment at 207–227 is disordered; sequence EPSSGPVRAKPTARGEAGSRD. One can recognise a bZIP domain in the interval 267–330; that stretch reads LVRDIRRRGK…EVMRQQLTDL (64 aa). The interval 269 to 288 is basic motif; it reads RDIRRRGKNKVAAQNCRKRK. The interval 292-299 is leucine-zipper; that stretch reads IVQLEREL. A Glycyl lysine isopeptide (Lys-Gly) (interchain with G-Cter in SUMO); alternate cross-link involves residue Lys-369. A Glycyl lysine isopeptide (Lys-Gly) (interchain with G-Cter in SUMO1); alternate cross-link involves residue Lys-369.

It belongs to the bZIP family. CNC subfamily. As to quaternary structure, homodimer; can bind DNA as a homodimer. Erythroid transcription activator nuclear factor erythroid-derived 2 (NF-E2), composed of a heterodimer of NFE2 and MAFK, possesses transactivation activity on beta-globin. Also forms high affinity heterodimer with MAFG; the interaction promotes erythropoiesis. Interacts (via the PXY motif 1) with ITCH (via the WW 1 domain); the interaction promotes 'Lys63'-linked ubiquitination of NFE2, translocates it to the cytoplasm and inhibits its transactivation activity. Interacts with KMT2D/MLL2; the interaction promotes transactivation of the beta-globin locus. Interacts with MAPK8 (phosphorylated form); the interaction leads to phosphorylation of NFE2 in undifferentiated cells. In terms of processing, phosphorylated on serine residues. In undifferentiated erythrocytes, phosphorylated by MAPK8 which then leads to ubiquitination and protein degradation. Post-translationally, sumoylated. Sumoylation is required for translocation to nuclear bodies PODs, anchoring to the gene loci, and transactivation of the beta-globin gene. Ubiquitinated mainly by 'Lys63'-linked ubiquitin. Polyubiquitination with 'Lys63'-linked ubiquitin by ITCH retains NFE2 in the cytoplasm preventing its transactivation activity. In undifferentiated erythrocyte, is ubiquitinated after MAPK8-mediatd phosphorylation leading to protein degradation.

It is found in the nucleus. The protein resides in the cytoplasm. In terms of biological role, component of the NF-E2 complex essential for regulating erythroid and megakaryocytic maturation and differentiation. Binds to the hypersensitive site 2 (HS2) of the beta-globin control region (LCR). This subunit (NFE2) recognizes the TCAT/C sequence of the AP-1-like core palindrome present in a number of erythroid and megakaryocytic gene promoters. Requires MAFK or other small MAF proteins for binding to the NF-E2 motif. May play a role in all aspects of hemoglobin production from globin and heme synthesis to procurement of iron. In Bos taurus (Bovine), this protein is Transcription factor NF-E2 45 kDa subunit (NFE2).